We begin with the raw amino-acid sequence, 250 residues long: 3-deoxy-manno-octulosonate cytidylyltransferase (250 aa).

The protein belongs to the KdsB family.

It is found in the cytoplasm. It catalyses the reaction 3-deoxy-alpha-D-manno-oct-2-ulosonate + CTP = CMP-3-deoxy-beta-D-manno-octulosonate + diphosphate. It functions in the pathway nucleotide-sugar biosynthesis; CMP-3-deoxy-D-manno-octulosonate biosynthesis; CMP-3-deoxy-D-manno-octulosonate from 3-deoxy-D-manno-octulosonate and CTP: step 1/1. The protein operates within bacterial outer membrane biogenesis; lipopolysaccharide biosynthesis. Functionally, activates KDO (a required 8-carbon sugar) for incorporation into bacterial lipopolysaccharide in Gram-negative bacteria. The sequence is that of 3-deoxy-manno-octulosonate cytidylyltransferase from Cytophaga hutchinsonii (strain ATCC 33406 / DSM 1761 / CIP 103989 / NBRC 15051 / NCIMB 9469 / D465).